The following is a 213-amino-acid chain: Orotate phosphoribosyltransferase (213 aa).

Lysine 26 is a binding site for 5-phospho-alpha-D-ribose 1-diphosphate. Phenylalanine 34–phenylalanine 35 provides a ligand contact to orotate. Residues tyrosine 72–lysine 73, arginine 99, lysine 100, lysine 103, histidine 105, and aspartate 124–alanine 132 contribute to the 5-phospho-alpha-D-ribose 1-diphosphate site. Residues threonine 128 and arginine 156 each coordinate orotate.

This sequence belongs to the purine/pyrimidine phosphoribosyltransferase family. PyrE subfamily. Homodimer. Mg(2+) serves as cofactor.

It catalyses the reaction orotidine 5'-phosphate + diphosphate = orotate + 5-phospho-alpha-D-ribose 1-diphosphate. The protein operates within pyrimidine metabolism; UMP biosynthesis via de novo pathway; UMP from orotate: step 1/2. Catalyzes the transfer of a ribosyl phosphate group from 5-phosphoribose 1-diphosphate to orotate, leading to the formation of orotidine monophosphate (OMP). The polypeptide is Orotate phosphoribosyltransferase (Salmonella paratyphi A (strain ATCC 9150 / SARB42)).